The chain runs to 415 residues: Serine/threonine transporter SstT (415 aa).

8 helical membrane passes run 23–43 (ILVG…AAIA), 47–67 (LGTL…LMLV), 85–105 (ILWL…LFSF), 144–164 (ALLK…GFAL), 181–201 (AVTF…FGLV), 220–240 (LMVL…LIVF), 303–323 (GAAI…GIAV), and 333–353 (VVAS…LLLI).

It belongs to the dicarboxylate/amino acid:cation symporter (DAACS) (TC 2.A.23) family.

The protein localises to the cell inner membrane. The catalysed reaction is L-serine(in) + Na(+)(in) = L-serine(out) + Na(+)(out). It catalyses the reaction L-threonine(in) + Na(+)(in) = L-threonine(out) + Na(+)(out). Involved in the import of serine and threonine into the cell, with the concomitant import of sodium (symport system). This Cronobacter sakazakii (strain ATCC BAA-894) (Enterobacter sakazakii) protein is Serine/threonine transporter SstT.